A 362-amino-acid polypeptide reads, in one-letter code: Dual-specificity RNA methyltransferase RlmN (362 aa).

Glutamate 91 (proton acceptor) is an active-site residue. Residues 97-333 (EDDRGTLCVS…VTTRKTRGED (237 aa)) enclose the Radical SAM core domain. Cysteine 104 and cysteine 338 are joined by a disulfide. [4Fe-4S] cluster-binding residues include cysteine 111, cysteine 115, and cysteine 118. Residues 164-165 (GE), serine 196, 218-220 (SLH), and asparagine 295 each bind S-adenosyl-L-methionine. Cysteine 338 acts as the S-methylcysteine intermediate in catalysis.

The protein belongs to the radical SAM superfamily. RlmN family. It depends on [4Fe-4S] cluster as a cofactor.

It localises to the cytoplasm. The enzyme catalyses adenosine(2503) in 23S rRNA + 2 reduced [2Fe-2S]-[ferredoxin] + 2 S-adenosyl-L-methionine = 2-methyladenosine(2503) in 23S rRNA + 5'-deoxyadenosine + L-methionine + 2 oxidized [2Fe-2S]-[ferredoxin] + S-adenosyl-L-homocysteine. It catalyses the reaction adenosine(37) in tRNA + 2 reduced [2Fe-2S]-[ferredoxin] + 2 S-adenosyl-L-methionine = 2-methyladenosine(37) in tRNA + 5'-deoxyadenosine + L-methionine + 2 oxidized [2Fe-2S]-[ferredoxin] + S-adenosyl-L-homocysteine. Its function is as follows. Specifically methylates position 2 of adenine 2503 in 23S rRNA and position 2 of adenine 37 in tRNAs. m2A2503 modification seems to play a crucial role in the proofreading step occurring at the peptidyl transferase center and thus would serve to optimize ribosomal fidelity. The sequence is that of Dual-specificity RNA methyltransferase RlmN from Methylobacillus flagellatus (strain ATCC 51484 / DSM 6875 / VKM B-1610 / KT).